The chain runs to 568 residues: Potassium-transporting ATPase potassium-binding subunit (568 aa).

A run of 10 helical transmembrane segments spans residues 3-23 (TEIL…YPLG), 64-84 (FLKA…VLLV), 133-153 (FVIM…MAGV), 179-199 (ILLP…TPMG), 255-275 (MVEC…LGFY), 281-301 (LGYS…FINV), 375-395 (FGGV…AVFI), 418-438 (IATF…AISS), 497-517 (IVLI…AGLL), and 535-555 (VTFA…SFFP).

Belongs to the KdpA family. As to quaternary structure, the system is composed of three essential subunits: KdpA, KdpB and KdpC.

Its subcellular location is the cell inner membrane. Part of the high-affinity ATP-driven potassium transport (or Kdp) system, which catalyzes the hydrolysis of ATP coupled with the electrogenic transport of potassium into the cytoplasm. This subunit binds the periplasmic potassium ions and delivers the ions to the membrane domain of KdpB through an intramembrane tunnel. The polypeptide is Potassium-transporting ATPase potassium-binding subunit (Bacteroides fragilis (strain ATCC 25285 / DSM 2151 / CCUG 4856 / JCM 11019 / LMG 10263 / NCTC 9343 / Onslow / VPI 2553 / EN-2)).